A 300-amino-acid chain; its full sequence is Acetylglutamate kinase (300 aa).

Residues 67 to 68 (GG), Arg-89, and Asn-194 contribute to the substrate site.

Belongs to the acetylglutamate kinase family. ArgB subfamily.

It localises to the cytoplasm. The catalysed reaction is N-acetyl-L-glutamate + ATP = N-acetyl-L-glutamyl 5-phosphate + ADP. It functions in the pathway amino-acid biosynthesis; L-arginine biosynthesis; N(2)-acetyl-L-ornithine from L-glutamate: step 2/4. Catalyzes the ATP-dependent phosphorylation of N-acetyl-L-glutamate. This chain is Acetylglutamate kinase, found in Saccharophagus degradans (strain 2-40 / ATCC 43961 / DSM 17024).